Consider the following 141-residue polypeptide: Antifungal protein ginkbilobin-like protein 1 (141 aa).

The N-terminal stretch at 1–32 (MSISSKFQLRSSTSLLLLVALMVVMGMDGAAA) is a signal peptide. The Gnk2-homologous domain occupies 36–141 (TNFVSSACNT…CFIQYEQHSF (106 aa)). Disulfide bonds link Cys-43-Cys-119, Cys-95-Cys-104, and Cys-107-Cys-132. Residue Asn-44 coordinates alpha-D-mannopyranose. 2 residues coordinate alpha-D-mannopyranose: Arg-126 and Glu-137.

Its function is as follows. Exerts antifungal activity through its carbohydrate-binding specificity. The sequence is that of Antifungal protein ginkbilobin-like protein 1 from Picea glauca (White spruce).